The chain runs to 75 residues: Small ribosomal subunit protein eS31 (75 aa).

Zn(2+) contacts are provided by C41, C44, C60, and C63. The C4-type zinc-finger motif lies at 41 to 63 (CPRCGSIMAHHLKPNERWSCGKC).

It belongs to the eukaryotic ribosomal protein eS31 family. In terms of assembly, part of the 30S ribosomal subunit. Requires Zn(2+) as cofactor.

The sequence is that of Small ribosomal subunit protein eS31 from Saccharolobus solfataricus (strain ATCC 35092 / DSM 1617 / JCM 11322 / P2) (Sulfolobus solfataricus).